We begin with the raw amino-acid sequence, 168 residues long: uncharacterized protein (168 aa).

Disordered stretches follow at residues 37–74 (GGSK…SQFT), 81–100 (QYNY…PNYY), and 117–168 (MQPF…EETN). Polar residues-rich tracts occupy residues 52–74 (HSGQ…SQFT) and 82–95 (YNYN…TRSV). Low complexity predominate over residues 120–129 (FNNQSFNNQS). Over residues 130–158 (RTHQSKTYQHNQQKRSFNGPRNNGPQNNV) the composition is skewed to polar residues.

This is an uncharacterized protein from Acanthamoeba polyphaga (Amoeba).